The chain runs to 639 residues: Threonine--tRNA ligase (639 aa).

Positions 1–61 (MIHITLPDGS…TQDSPLSIVT (61 aa)) constitute a TGS domain. A catalytic region spans residues 242–533 (DHRKLGRELD…LIEEHAGALP (292 aa)). Zn(2+)-binding residues include Cys-333, His-384, and His-510.

The protein belongs to the class-II aminoacyl-tRNA synthetase family. In terms of assembly, homodimer. Zn(2+) serves as cofactor.

It localises to the cytoplasm. It carries out the reaction tRNA(Thr) + L-threonine + ATP = L-threonyl-tRNA(Thr) + AMP + diphosphate + H(+). In terms of biological role, catalyzes the attachment of threonine to tRNA(Thr) in a two-step reaction: L-threonine is first activated by ATP to form Thr-AMP and then transferred to the acceptor end of tRNA(Thr). Also edits incorrectly charged L-seryl-tRNA(Thr). The sequence is that of Threonine--tRNA ligase from Acidovorax ebreus (strain TPSY) (Diaphorobacter sp. (strain TPSY)).